A 378-amino-acid polypeptide reads, in one-letter code: Acetylornithine deacetylase (378 aa).

His-76 provides a ligand contact to Zn(2+). Asp-78 is an active-site residue. Asp-108 serves as a coordination point for Zn(2+). Residue Glu-140 is part of the active site. 3 residues coordinate Zn(2+): Glu-141, Glu-165, and His-351.

This sequence belongs to the peptidase M20A family. ArgE subfamily. As to quaternary structure, homodimer. Zn(2+) is required as a cofactor. Co(2+) serves as cofactor. It depends on glutathione as a cofactor.

It is found in the cytoplasm. The enzyme catalyses N(2)-acetyl-L-ornithine + H2O = L-ornithine + acetate. The protein operates within amino-acid biosynthesis; L-arginine biosynthesis; L-ornithine from N(2)-acetyl-L-ornithine (linear): step 1/1. Its function is as follows. Catalyzes the hydrolysis of the amide bond of N(2)-acetylated L-amino acids. Cleaves the acetyl group from N-acetyl-L-ornithine to form L-ornithine, an intermediate in L-arginine biosynthesis pathway, and a branchpoint in the synthesis of polyamines. This is Acetylornithine deacetylase from Aliivibrio salmonicida (strain LFI1238) (Vibrio salmonicida (strain LFI1238)).